Consider the following 479-residue polypeptide: MAQHAVYFPDAFLTQMREAMPSTLSFDEFISACQRPLRRSIRINTLKISVADFLALIAPYGWSLTPIPWCHEGFWIERDDEEALPLGSTAEHLSGLFYIQEASSMLPVAALFADDNHPQRVMDMAAAPGSKTTQIAARMGNRGAILANEFSASRVKVLHANISRCGIANTALTHFDGRVFGAALPEMFDAILLDAPCSGEGVVRKDPDALKNWSPESNLDIAATQRELLNSAFHALRPGGTLVYSTCTLNRQENEEVCLWLKETYADAVEFLPLGDLFPDADRALTPEGFLHVFPQIYDCEGFFVARLRKMSSLPAMPAPGYKVGAFPFTPLKGREALHVTQAANAVGLLWDENLHLWQREKEVWLFPAEIESLIGKVRFSRLGIKLAESHNKGYRWQHEATIALACPTHAHAFELSVQEAEEWYRGRDIYPQTPPAADDVLVTFQHQPLGLAKRIGARIKNSYPRELVRDGKLFTGNS.

Residues 125–131, E149, D176, and D194 each bind S-adenosyl-L-methionine; that span reads AAAPGSK. The Nucleophile role is filled by C247.

The protein belongs to the class I-like SAM-binding methyltransferase superfamily. RsmB/NOP family.

Its subcellular location is the cytoplasm. It catalyses the reaction cytidine(1407) in 16S rRNA + S-adenosyl-L-methionine = 5-methylcytidine(1407) in 16S rRNA + S-adenosyl-L-homocysteine + H(+). In terms of biological role, specifically methylates the cytosine at position 1407 (m5C1407) of 16S rRNA. The chain is Ribosomal RNA small subunit methyltransferase F from Salmonella enteritidis PT4 (strain P125109).